We begin with the raw amino-acid sequence, 225 residues long: Heptaprenylglyceryl phosphate synthase (225 aa).

Lys6 is a binding site for sn-glycerol 1-phosphate. Mg(2+) is bound by residues Asp8 and Thr34. Sn-glycerol 1-phosphate is bound by residues 153–158 (YVEYSG), Gly183, and 203–204 (GN).

This sequence belongs to the GGGP/HepGP synthase family. Group I subfamily. As to quaternary structure, homodimer. Mg(2+) is required as a cofactor.

It catalyses the reaction sn-glycerol 1-phosphate + all-trans-heptaprenyl diphosphate = 3-heptaprenyl-sn-glycero-1-phosphate + diphosphate. Its pathway is membrane lipid metabolism; glycerophospholipid metabolism. Its function is as follows. Prenyltransferase that catalyzes in vivo the transfer of the heptaprenyl moiety of heptaprenyl pyrophosphate (HepPP; 35 carbon atoms) to the C3 hydroxyl of sn-glycerol-1-phosphate (G1P), producing heptaprenylglyceryl phosphate (HepGP). This reaction is an ether-bond-formation step in the biosynthesis of archaea-type G1P-based membrane lipids found in Bacillales. In Listeria monocytogenes serotype 4a (strain HCC23), this protein is Heptaprenylglyceryl phosphate synthase.